We begin with the raw amino-acid sequence, 208 residues long: Protein Nef (208 aa).

G2 carries N-myristoyl glycine; by host lipidation. S6 carries the phosphoserine; by host modification. The disordered stretch occupies residues 16–51; it reads IRERMRRTPPTPPAAEGVGAVSQDLERRGAITSSNT. Residues 65–68 are acidic; interacts with host PACS1 and PACS2; stabilizes the interaction of NEF/MHC-I with host AP1M1; necessary for MHC-I internalization; that stretch reads EEDE. An SH3-binding; interaction with Src family tyrosine kinases region spans residues 72-81; sequence PVRPQVPLRP. Residues 75-78 carry the PxxP; stabilizes the interaction of NEF/MHC-I with host AP1M1; necessary for MHC-I internalization motif; that stretch reads PQVP. Residues 111 to 127 are mediates dimerization, Nef-PTE1 interaction; it reads EILDLWVYHTQGYFPDW. Residues 151 to 183 are binding to ATP6V1H; the sequence is VDPEEVEKANEGENNCLLHPMSQHGMEDEDKEV. A Dileucine internalization motif; necessary for CD4 internalization motif is present at residues 167 to 168; sequence LL. Positions 177–178 match the Diacidic; necessary for CD4 internalization motif; that stretch reads ED.

This sequence belongs to the lentivirus primate group Nef protein family. In terms of assembly, monomer; cytosolic form. Homodimer; membrane bound form. Interacts with Nef associated p21-activated kinase (PAK2); this interaction activates PAK2. Associates with the Nef-MHC-I-AP1 complex; this complex is required for MHC-I internalization. Interacts (via C-terminus) with host PI3-kinase. Interacts with host PACS1; this interaction seems to be weak. Interacts with host PACS2. Interacts with host LCK and MAPK3; these interactions inhibit the kinase activity of the latter. Interacts with host ATP6V1H; this interaction may play a role in CD4 endocytosis. Associates with the CD4-Nef-AP2 complex; this complex is required for CD4 internalization. Interacts with host AP2 subunit alpha and AP2 subunit sigma2. Interacts with TCR-zeta chain; this interaction up-regulates the Fas ligand (FasL) surface expression. Interacts with host HCK, LYN, and SRC; these interactions activate the Src family kinases. Interacts with MAP3K5; this interaction inhibits the Fas and TNFR-mediated death signals. Interacts with beta-COP and PTE1. Interacts with human RACK1; this increases Nef phosphorylation by PKC. Interacts with TP53; this interaction decreases the half-life of TP53, protecting the infected cell against p53-mediated apoptosis. Post-translationally, the virion-associated Nef proteins are cleaved by the viral protease to release the soluble C-terminal core protein. Nef is probably cleaved concomitantly with viral structural proteins on maturation of virus particles. In terms of processing, myristoylated. Phosphorylated on serine residues, probably by host PKCdelta and theta.

Its subcellular location is the host cell membrane. The protein localises to the virion. It is found in the secreted. The protein resides in the host Golgi apparatus membrane. Its function is as follows. Factor of infectivity and pathogenicity, required for optimal virus replication. Alters numerous pathways of T-lymphocyte function and down-regulates immunity surface molecules in order to evade host defense and increase viral infectivity. Alters the functionality of other immunity cells, like dendritic cells, monocytes/macrophages and NK cells. In terms of biological role, in infected CD4(+) T-lymphocytes, down-regulates the surface MHC-I, mature MHC-II, CD4, CD28, CCR5 and CXCR4 molecules. Mediates internalization and degradation of host CD4 through the interaction of with the cytoplasmic tail of CD4, the recruitment of AP-2 (clathrin adapter protein complex 2), internalization through clathrin coated pits, and subsequent transport to endosomes and lysosomes for degradation. Diverts host MHC-I molecules to the trans-Golgi network-associated endosomal compartments by an endocytic pathway to finally target them for degradation. MHC-I down-regulation may involve AP-1 (clathrin adapter protein complex 1) or possibly Src family kinase-ZAP70/Syk-PI3K cascade recruited by PACS2. In consequence infected cells are masked for immune recognition by cytotoxic T-lymphocytes. Decreasing the number of immune receptors also prevents reinfection by more HIV particles (superinfection). Down-regulates host SERINC3 and SERINC5 thereby excluding these proteins from the viral particles. Virion infectivity is drastically higher when SERINC3 or SERINC5 are excluded from the viral envelope, because these host antiviral proteins impair the membrane fusion event necessary for subsequent virion penetration. Bypasses host T-cell signaling by inducing a transcriptional program nearly identical to that of anti-CD3 cell activation. Interaction with TCR-zeta chain up-regulates the Fas ligand (FasL). Increasing surface FasL molecules and decreasing surface MHC-I molecules on infected CD4(+) cells send attacking cytotoxic CD8+ T-lymphocytes into apoptosis. Functionally, plays a role in optimizing the host cell environment for viral replication without causing cell death by apoptosis. Protects the infected cells from apoptosis in order to keep them alive until the next virus generation is ready to strike. Inhibits the Fas and TNFR-mediated death signals by blocking MAP3K5/ASK1. Decreases the half-life of TP53, protecting the infected cell against p53-mediated apoptosis. Inhibits the apoptotic signals regulated by the Bcl-2 family proteins through the formation of a Nef/PI3-kinase/PAK2 complex that leads to activation of PAK2 and induces phosphorylation of host BAD. Its function is as follows. Extracellular Nef protein targets CD4(+) T-lymphocytes for apoptosis by interacting with CXCR4 surface receptors. The polypeptide is Protein Nef (Human immunodeficiency virus type 1 group M subtype F1 (isolate 93BR020) (HIV-1)).